The following is a 629-amino-acid chain: Glycerol-3-phosphate dehydrogenase SDP6, mitochondrial (629 aa).

The transit peptide at 1-48 (MSLASIRRLAAGAAVIAAASGGAVYLSPSVASSDKGGGPILDSLRRRL) directs the protein to the mitochondrion. Residue 75-103 (DVLVIGGGATGSGVALDAVTRGLRVGLVE) coordinates FAD.

This sequence belongs to the FAD-dependent glycerol-3-phosphate dehydrogenase family. It depends on FAD as a cofactor. Expressed in germinating seedlings. Also detected in roots, leaves, flowers, developing siliques and germinating seeds.

The protein resides in the mitochondrion inner membrane. It catalyses the reaction a quinone + sn-glycerol 3-phosphate = dihydroxyacetone phosphate + a quinol. It participates in polyol metabolism; glycerol degradation via glycerol kinase pathway; glycerone phosphate from sn-glycerol 3-phosphate (anaerobic route): step 1/1. Its function is as follows. Required for glycerol catabolism and involved in NADH/NAD(+) homeostasis. Essential for postgerminative growth and seedling establishment. The chain is Glycerol-3-phosphate dehydrogenase SDP6, mitochondrial from Arabidopsis thaliana (Mouse-ear cress).